A 99-amino-acid polypeptide reads, in one-letter code: Fetal and adult testis-expressed transcript protein homolog (99 aa).

The chain crosses the membrane as a helical span at residues 79 to 98; that stretch reads AALFTLLVSVCIANLWLWVH.

As to quaternary structure, interacts with BIK and RNF183. Interacts with IMMT/MIC60and EMD.

It localises to the mitochondrion. The protein localises to the mitochondrion outer membrane. Its subcellular location is the endoplasmic reticulum membrane. Its function is as follows. Involved in the regulation of endoplasmic reticulum (ER)-mitochondria coupling. Negatively regulates the ER-mitochondria distance and Ca(2+) transfer from ER to mitochondria possibly implicating it in the regulation of apoptosis. May collaborate with RNF183 to restrain BIK protein levels thus regulating apoptotic signaling. This chain is Fetal and adult testis-expressed transcript protein homolog (Fate1), found in Mus musculus (Mouse).